Reading from the N-terminus, the 561-residue chain is DNA ligase B (561 aa).

Catalysis depends on lysine 124, which acts as the N6-AMP-lysine intermediate.

It belongs to the NAD-dependent DNA ligase family. LigB subfamily.

It catalyses the reaction NAD(+) + (deoxyribonucleotide)n-3'-hydroxyl + 5'-phospho-(deoxyribonucleotide)m = (deoxyribonucleotide)n+m + AMP + beta-nicotinamide D-nucleotide.. In terms of biological role, catalyzes the formation of phosphodiester linkages between 5'-phosphoryl and 3'-hydroxyl groups in double-stranded DNA using NAD as a coenzyme and as the energy source for the reaction. The polypeptide is DNA ligase B (Cronobacter sakazakii (strain ATCC BAA-894) (Enterobacter sakazakii)).